Reading from the N-terminus, the 677-residue chain is Methionine--tRNA ligase (677 aa).

The 'HIGH' region signature appears at 15–25 (PYANGSIHLGH). Residues Cys-146, Cys-149, Cys-159, and Cys-162 each contribute to the Zn(2+) site. Residues 333-337 (KMSKS) carry the 'KMSKS' region motif. Residue Lys-336 coordinates ATP. The tRNA-binding domain occupies 575–677 (DFAKVDLRVA…AGAKPGHQVK (103 aa)).

The protein belongs to the class-I aminoacyl-tRNA synthetase family. MetG type 1 subfamily. As to quaternary structure, homodimer. The cofactor is Zn(2+).

It is found in the cytoplasm. The catalysed reaction is tRNA(Met) + L-methionine + ATP = L-methionyl-tRNA(Met) + AMP + diphosphate. Is required not only for elongation of protein synthesis but also for the initiation of all mRNA translation through initiator tRNA(fMet) aminoacylation. The sequence is that of Methionine--tRNA ligase from Escherichia fergusonii (strain ATCC 35469 / DSM 13698 / CCUG 18766 / IAM 14443 / JCM 21226 / LMG 7866 / NBRC 102419 / NCTC 12128 / CDC 0568-73).